Here is a 565-residue protein sequence, read N- to C-terminus: Inositol-3-phosphate synthase (565 aa).

Residues Gly70, Gly71, Asn72, Asn73, Asp144, Ser180, Ile181, Gln191, Arg194, Thr231, Ala232, Asn233, Thr234, Gly282, Ser283, Asp307, Ser310, Asn341, Asn342, Asp343, Lys356, Gly394, Asp395, Asp423, and Ser424 each contribute to the NAD(+) site. The residue at position 536 (Ser536) is a Phosphoserine. Residues 546 to 565 (LHANGHSNGSAKLATNGNGH) form a disordered region. Residues 550-565 (GHSNGSAKLATNGNGH) show a composition bias toward polar residues.

Belongs to the myo-inositol 1-phosphate synthase family. NAD(+) is required as a cofactor. Higher expression in adult heads than bodies.

Its subcellular location is the cytoplasm. The enzyme catalyses D-glucose 6-phosphate = 1D-myo-inositol 3-phosphate. It functions in the pathway polyol metabolism; myo-inositol biosynthesis; myo-inositol from D-glucose 6-phosphate: step 1/2. Its function is as follows. Key enzyme in myo-inositol biosynthesis pathway that catalyzes the conversion of glucose 6-phosphate to 1-myo-inositol 1-phosphate in a NAD-dependent manner. Rate-limiting enzyme in the synthesis of all inositol-containing compounds. The polypeptide is Inositol-3-phosphate synthase (Inos) (Drosophila melanogaster (Fruit fly)).